The primary structure comprises 226 residues: Fibronectin type III domain-containing protein 9 (226 aa).

One can recognise a Fibronectin type-III domain in the interval 1 to 101 (MNIEVGNVSH…FHTLDKSPLA (101 aa)). Residues 113–133 (LWVLMAILLACFTAVLAFICL) traverse the membrane as a helical segment.

It is found in the membrane. The sequence is that of Fibronectin type III domain-containing protein 9 (Fndc9) from Mus musculus (Mouse).